The chain runs to 175 residues: MALTLEQKQKVVAEVSEVAANAYSAVAADYHGLEVAQLTKLRNQAREKGVVLKVVKNTLAKRAFEGTSFECMSDKMVGPLLLAFSTEDLGSAARVIHEFAKEHKALEPKLVSVGGELFGPEEIERVAKLPTRDEALSILMATMKAPVTKLARTMKEVPGKFVRTVAAVKDAKEAA.

Belongs to the universal ribosomal protein uL10 family. Part of the ribosomal stalk of the 50S ribosomal subunit. The N-terminus interacts with L11 and the large rRNA to form the base of the stalk. The C-terminus forms an elongated spine to which L12 dimers bind in a sequential fashion forming a multimeric L10(L12)X complex.

Forms part of the ribosomal stalk, playing a central role in the interaction of the ribosome with GTP-bound translation factors. This chain is Large ribosomal subunit protein uL10, found in Psychrobacter sp. (strain PRwf-1).